Here is a 470-residue protein sequence, read N- to C-terminus: UDP-glycosyltransferase 91A1 (470 aa).

UDP-alpha-D-glucose-binding positions include Ser-290, 350–352 (VEQ), 367–375 (HPGWGTIIE), and 389–392 (VYDQ).

It belongs to the UDP-glycosyltransferase family.

The chain is UDP-glycosyltransferase 91A1 (UGT91A1) from Arabidopsis thaliana (Mouse-ear cress).